The sequence spans 604 residues: UvrABC system protein C (604 aa).

Positions 17-95 (SQPGVYRMLN…IKSLAPRYNI (79 aa)) constitute a GIY-YIG domain. Residues 204–239 (DEVLKTIEQKMFEASDRQAYEQAVLFRDQMQALRMI) form the UVR domain.

This sequence belongs to the UvrC family. Interacts with UvrB in an incision complex.

The protein localises to the cytoplasm. Functionally, the UvrABC repair system catalyzes the recognition and processing of DNA lesions. UvrC both incises the 5' and 3' sides of the lesion. The N-terminal half is responsible for the 3' incision and the C-terminal half is responsible for the 5' incision. This Nitrosomonas eutropha (strain DSM 101675 / C91 / Nm57) protein is UvrABC system protein C.